The primary structure comprises 748 residues: MTISRPEQEVKILVEKDPIKTSFEKWAKPGHFSRNLSKGPNTTTWIWNLHADAHDFDSHTSDLEDISRKVFSAHFGQLAVIFIWISGMYFHGARFSNYEAWLSDPIHIKPSAQVVWPIVGQEILNGDVGGGFQGIQITSGFFQIWRASGITSELQLYTTAIGGLVMAGLMLFAGWFHYHKAAPKLAWFQDVESMLNHHLAGLLGLGSLAWAGHQIHVSMPINELLDAGVDPKEIPLPHEFILNRDLIAELYPSFKSGLIPFFTLNWSAYSDFLTFRGGLNPVTGGLWLSDTAHHHLAIAVLFLIAGHMYRTNWGIGHNMKDILEAHKGPFTGEGHKGLYEIFTTSWHAQLSLNLAMLGSLTIIVAHHMYSMPPYPYLAIDYGTQLSLFTHHMWIGGFCIVGAAAHAAIFMVRDYDSANQYNNLLDRVIRHRDAIISHLNWACIFLGFHSFGLYIHNDTMRALGRPQDMFSDTAIQLQPIFAQWIQNTHVLAPSLTAPQATSATSPVWGEGLITVGGKVAMMPIPLGTADFLVHHIHAFTIHVTVLILLKGVLFSRSSRLIPDKANLGFRFPCDGPGRGGTCQVSAWDHIFLGLFWMYNSLSIAIFHFSWKMQSDVWGNVTPQGISHITGGNFAQSSITINGWLRDFLWAQASQVIQSYGSPLSAYGLIFLGAHFVWAFSLMFLFSGRGYWQELIESIVWAHNKLKVAPAIQPRALSIVQGRAVGVAHYLLGGIATTWAFFLARIISVA.

8 consecutive transmembrane segments (helical) span residues 70 to 93 (VFSA…FHGA), 156 to 179 (LYTT…FHYH), 195 to 219 (LNHH…HVSM), 291 to 309 (TAHH…GHMY), 346 to 369 (WHAQ…HHMY), 385 to 411 (LSLF…IFMV), 433 to 455 (AIIS…LYIH), and 530 to 548 (FLVH…LILL). Residues C572 and C581 each coordinate [4Fe-4S] cluster. The next 2 membrane-spanning stretches (helical) occupy residues 588–609 (HIFL…HFSW) and 662–684 (LSAY…MFLF). H673 contributes to the chlorophyll a' binding site. Chlorophyll a is bound by residues M681 and Y689. W690 is a binding site for phylloquinone. Residues 722 to 742 (AVGVAHYLLGGIATTWAFFLA) traverse the membrane as a helical segment.

This sequence belongs to the PsaA/PsaB family. The PsaA/B heterodimer binds the P700 chlorophyll special pair and subsequent electron acceptors. PSI consists of a core antenna complex that captures photons, and an electron transfer chain that converts photonic excitation into a charge separation. The eukaryotic PSI reaction center is composed of at least 11 subunits. The cofactor is P700 is a chlorophyll a/chlorophyll a' dimer, A0 is one or more chlorophyll a, A1 is one or both phylloquinones and FX is a shared 4Fe-4S iron-sulfur center..

Its subcellular location is the plastid. It localises to the chloroplast thylakoid membrane. The catalysed reaction is reduced [plastocyanin] + hnu + oxidized [2Fe-2S]-[ferredoxin] = oxidized [plastocyanin] + reduced [2Fe-2S]-[ferredoxin]. PsaA and PsaB bind P700, the primary electron donor of photosystem I (PSI), as well as the electron acceptors A0, A1 and FX. PSI is a plastocyanin-ferredoxin oxidoreductase, converting photonic excitation into a charge separation, which transfers an electron from the donor P700 chlorophyll pair to the spectroscopically characterized acceptors A0, A1, FX, FA and FB in turn. Oxidized P700 is reduced on the lumenal side of the thylakoid membrane by plastocyanin. This chain is Photosystem I P700 chlorophyll a apoprotein A1, found in Chara vulgaris (Common stonewort).